The chain runs to 247 residues: Oil body-associated protein 2A (247 aa).

Residues 1–26 (MASSDERPGAYPARDGSENLPPGDPK) are disordered.

This sequence belongs to the OBAP family.

In Arabidopsis thaliana (Mouse-ear cress), this protein is Oil body-associated protein 2A.